Consider the following 1363-residue polypeptide: Spike glycoprotein (1363 aa).

Positions 1 to 13 (MFLILLISLPTAF) are cleaved as a signal peptide. Residues 14–1307 (AVIGDLKCTT…GTYEYYVKWP (1294 aa)) lie on the Extracellular side of the membrane. Positions 15 to 298 (VIGDLKCTTV…DFMSEIKCKT (284 aa)) constitute a BetaCoV S1-NTD domain. Cystine bridges form between C21–C165, C160–C193, C172–C252, C286–C296, and C331–C356. Residues N59 and N133 are each glycosylated (N-linked (GlcNAc...) asparagine; by host). N198 carries N-linked (GlcNAc...) asparagine; by host glycosylation. Positions 329–617 (PDCNIEAWLN…DVNSGTTCST (289 aa)) constitute a BetaCoV S1-CTD domain. The N-linked (GlcNAc...) asparagine; by host glycan is linked to N359. 2 cysteine pairs are disulfide-bonded: C374/C427 and C386/C615. N-linked (GlcNAc...) asparagine; by host glycosylation is found at N437, N649, N676, N696, N714, N739, and N788. 2 fusion peptide regions span residues 914-935 (SAIE…VEAY) and 933-953 (EAYN…VQSY). An N-linked (GlcNAc...) asparagine; by host glycan is attached at N937. Cysteines 938 and 949 form a disulfide. Residues 1014–1064 (QKLIANAFNNALGAIQEGFDATNSALVKIQAVVNANAEALNNLLQQLSNRF) are heptad repeat 1. Residues 1043–1087 (QAVVNANAEALNNLLQQLSNRFGAISSSLQEILSRLDALEAQAQI) are a coiled coil. N-linked (GlcNAc...) asparagine; by host glycosylation is found at N1194, N1224, N1234, N1253, N1267, and N1288. The heptad repeat 2 stretch occupies residues 1258-1296 (APDLSLDYINVTFLDLQDEMNRLQEAIKVLNQSYINLKD). Residues 1269–1297 (TFLDLQDEMNRLQEAIKVLNQSYINLKDI) are a coiled coil. The chain crosses the membrane as a helical span at residues 1308 to 1328 (WYVWLLIGFAGVAMLVLLFFI). Topologically, residues 1329–1363 (CCCTGCGTSCFKKCGGCCDDYTGHQELVIKTSHDD) are cytoplasmic. The KxHxx motif lies at 1359–1363 (TSHDD).

The protein belongs to the betacoronaviruses spike protein family. Homotrimer; each monomer consists of a S1 and a S2 subunit. The resulting peplomers protrude from the virus surface as spikes. Specific enzymatic cleavages in vivo yield mature proteins. The precursor is processed into S1 and S2 by host cell furin or another cellular protease to yield the mature S1 and S2 proteins. Additionally, a second cleavage leads to the release of a fusion peptide after viral attachment to host cell receptor. Post-translationally, the cytoplasmic Cys-rich domain is palmitoylated. Spike glycoprotein is digested within host endosomes.

It is found in the virion membrane. The protein resides in the host endoplasmic reticulum-Golgi intermediate compartment membrane. Its subcellular location is the host cell membrane. In terms of biological role, attaches the virion to the cell membrane by interacting with host receptor, initiating the infection. Functionally, mediates fusion of the virion and cellular membranes by acting as a class I viral fusion protein. Under the current model, the protein has at least three conformational states: pre-fusion native state, pre-hairpin intermediate state, and post-fusion hairpin state. During viral and target cell membrane fusion, the coiled coil regions (heptad repeats) assume a trimer-of-hairpins structure, positioning the fusion peptide in close proximity to the C-terminal region of the ectodomain. The formation of this structure appears to drive apposition and subsequent fusion of viral and target cell membranes. Its function is as follows. Acts as a viral fusion peptide which is unmasked following S2 cleavage occurring upon virus endocytosis. The chain is Spike glycoprotein from Bovine coronavirus (strain LSU-94LSS-051) (BCoV-LSU).